Consider the following 364-residue polypeptide: Glutamate 5-kinase (364 aa).

Lys7 contacts ATP. Residues Ser47, Asp134, and Asn146 each contribute to the substrate site. Residues 166 to 167 and 209 to 215 contribute to the ATP site; these read TD and TGGIKTK. Positions 274 to 349 constitute a PUA domain; sequence QGTLHVDDGA…NRIKSTQYPV (76 aa).

Belongs to the glutamate 5-kinase family.

It is found in the cytoplasm. The catalysed reaction is L-glutamate + ATP = L-glutamyl 5-phosphate + ADP. The protein operates within amino-acid biosynthesis; L-proline biosynthesis; L-glutamate 5-semialdehyde from L-glutamate: step 1/2. Functionally, catalyzes the transfer of a phosphate group to glutamate to form L-glutamate 5-phosphate. The polypeptide is Glutamate 5-kinase (Prochlorococcus marinus (strain SARG / CCMP1375 / SS120)).